Here is a 44-residue protein sequence, read N- to C-terminus: Pandinin-1 (44 aa).

Expressed by the venom gland.

It localises to the secreted. The protein localises to the target cell membrane. Its function is as follows. Disrupts cell membranes through formation of pores. Strong antimicrobial activity against Gram-positive bacteria B.subtilis, S.epidermidis, E.faecalis and S.aureus. Less active against Gram-negative bacteria P.aeruginosa and E.coli. Has no antifungal or hemolytic activity. The sequence is that of Pandinin-1 from Pandinus imperator (Emperor scorpion).